The chain runs to 93 residues: Large ribosomal subunit protein mL41 (93 aa).

The transit peptide at 1–13 (MHQSLLCFGARRL) directs the protein to the mitochondrion.

The protein belongs to the mitochondrion-specific ribosomal protein mL41 family. Component of the mitochondrial large ribosomal subunit (mt-LSU). Mature yeast 74S mitochondrial ribosomes consist of a small (37S) and a large (54S) subunit. The 37S small subunit contains a 15S ribosomal RNA (15S mt-rRNA) and at least 32 different proteins. The 54S large subunit contains a 21S rRNA (21S mt-rRNA) and at least 45 different proteins.

Its subcellular location is the mitochondrion. Component of the mitochondrial ribosome (mitoribosome), a dedicated translation machinery responsible for the synthesis of mitochondrial genome-encoded proteins, including at least some of the essential transmembrane subunits of the mitochondrial respiratory chain. The mitoribosomes are attached to the mitochondrial inner membrane and translation products are cotranslationally integrated into the membrane. In Schizosaccharomyces pombe (strain 972 / ATCC 24843) (Fission yeast), this protein is Large ribosomal subunit protein mL41 (mrpl27).